We begin with the raw amino-acid sequence, 442 residues long: Syndecan-3 (442 aa).

Disordered stretches follow at residues 1-25 and 47-80; these read MKPGPPRRGTAQGQRVDTATHAPGA and RWRNENFERPVDLEGSGDDDSFPDDELDDLYSGS. The N-terminal stretch at 1–44 is a signal peptide; that stretch reads MKPGPPRRGTAQGQRVDTATHAPGARGLLLPPLLLLLLAGRAAG. The Extracellular segment spans residues 45 to 387; that stretch reads AQRWRNENFE…SILERKEVLV (343 aa). The segment covering 48 to 58 has biased composition (basic and acidic residues); that stretch reads WRNENFERPVD. Over residues 61-75 the composition is skewed to acidic residues; it reads GSGDDDSFPDDELDD. O-linked (Xyl...) (glycosaminoglycan) serine glycans are attached at residues S78, S80, S82, and S89. O-linked (GalNAc) threonine; by GALNT13 glycosylation occurs at T107. Disordered regions lie at residues 152 to 199, 253 to 293, and 305 to 327; these read ESSQ…PATA, ATSR…AQTP, and EPEVPVSGGPSGDFELQEETTQP. Composition is skewed to low complexity over residues 157-199 and 276-287; these read ATTI…PATA and TLPLGTTAPGPT. S161 is a glycosylation site (O-linked (GalNAc) serine; by GALNT13). O-linked (GalNAc) threonine; by GALNT13 glycans are attached at residues T162, T163, T170, and T172. Residues S315 and S367 are each glycosylated (O-linked (Xyl...) (glycosaminoglycan) serine). The helical transmembrane segment at 388 to 408 threads the bilayer; the sequence is AVIVGGVVGALFAAFLVTLLI. Phosphotyrosine is present on residues Y409, Y419, Y431, and Y441. The Cytoplasmic portion of the chain corresponds to 409–442; sequence YRMKKKDEGSYTLEEPKQASVTYQKPDKQEEFYA. Residues 419–442 form a disordered region; sequence YTLEEPKQASVTYQKPDKQEEFYA. The span at 433 to 442 shows a compositional bias: basic and acidic residues; that stretch reads KPDKQEEFYA.

The protein belongs to the syndecan proteoglycan family. In terms of assembly, interacts with TIAM1. Interacts with PTN (via heparan sulfate chains); this interaction mediates the neurite outgrowth-promoting signal from PTN to the cytoskeleton of growing neurites; this interaction mediates osteoblast recruitment. Interacts with MDK; this interaction induces SDC3 clustering; this interaction induces neuronal cell adhesion and neurite outgrowth. Post-translationally, O-glycosylated within the Thr/Ser-rich region which could interact with lectin domains on other molecules.

The protein localises to the cell membrane. Its function is as follows. Cell surface proteoglycan that may bear heparan sulfate. May have a role in the organization of cell shape by affecting the actin cytoskeleton, possibly by transferring signals from the cell surface in a sugar-dependent mechanism. The chain is Syndecan-3 (Sdc3) from Mus musculus (Mouse).